Consider the following 242-residue polypeptide: Linker for activation of T-cells family member 1 (242 aa).

Topologically, residues 1-4 are extracellular; sequence MEAD. Residues 5–28 traverse the membrane as a helical; Signal-anchor for type III membrane protein segment; that stretch reads ALSPVGLGLLLLPFLVTLLAALCV. 2 S-palmitoyl cysteine lipidation sites follow: cysteine 27 and cysteine 30. Residues 29–242 lie on the Cytoplasmic side of the membrane; the sequence is RCRELPVSYD…PDYENLQELN (214 aa). Threonine 40 carries the phosphothreonine modification. 6 positions are modified to phosphoserine: serine 41, serine 44, serine 87, serine 104, serine 109, and serine 112. Residues 78–118 are disordered; that stretch reads QPDLLPIPRSPQPLGGSHRMPSSQQNSDDANSVASYENQEP. A compositionally biased stretch (polar residues) spans 97-115; it reads MPSSQQNSDDANSVASYEN. Residues 136–139 are interaction with PLCG1; it reads YLVV. Position 175 is a phosphotyrosine (tyrosine 175). Interaction with GRB2, GRAP2 and PIK3R1 stretches follow at residues 175–178 and 195–198; these read YVNV. The tract at residues 176-242 is disordered; it reads VNVPESEESA…PDYENLQELN (67 aa). Residues serine 199, serine 212, and serine 215 each carry the phosphoserine modification. A compositionally biased stretch (acidic residues) spans 217 to 234; that stretch reads EVEDEGEEEGVDGEEAPD. Tyrosine 235 is subject to Phosphotyrosine.

As to quaternary structure, when phosphorylated, interacts directly with the PIK3R1 subunit of phosphoinositide 3-kinase and the SH2 domains of GRB2, GRAP, GRAP2, PLCG1 and PLCG2. Interacts indirectly with CBL, SOS, VAV, and LCP2. Interacts with SHB and SKAP2. Interacts with FCGR1A. Interacts with CLNK. Interacts with GRB2, PLCG1 and THEMIS upon TCR activation in thymocytes. Interacts with THEMIS2. Phosphorylated on tyrosines by ZAP70 upon TCR activation, or by SYK upon other immunoreceptor activation; which leads to the recruitment of multiple signaling molecules. Is one of the most prominently tyrosine-phosphorylated proteins detected following TCR engagement. May be dephosphorylated by PTPRJ. Phosphorylated by ITK leading to the recruitment of VAV1 to LAT-containing complexes. Post-translationally, palmitoylation of Cys-27 and Cys-30 is required for raft targeting and efficient phosphorylation. In terms of processing, phosphorylated on tyrosines by ZAP70 upon TCR activation, or by SYK upon other immunoreceptor activation; which leads to the recruitment of multiple signaling molecules. Is one of the most prominently tyrosine-phosphorylated proteins detected following TCR engagement. May be dephosphorylated by PTPRJ. Phosphorylated by ITK leading to the recruitment of VAV1 to LAT-containing complexes. 'Lys-63'-linked ubiquitinated by TRAF6. In terms of tissue distribution, expressed in T-cells and mast cells.

It is found in the cell membrane. Its function is as follows. Required for TCR (T-cell antigen receptor)- and pre-TCR-mediated signaling, both in mature T-cells and during their development. Involved in FCGR3 (low affinity immunoglobulin gamma Fc region receptor III)-mediated signaling in natural killer cells and FCER1 (high affinity immunoglobulin epsilon receptor)-mediated signaling in mast cells. Couples activation of these receptors and their associated kinases with distal intracellular events such as mobilization of intracellular calcium stores, PKC activation, MAPK activation or cytoskeletal reorganization through the recruitment of PLCG1, GRB2, GRAP2, and other signaling molecules. This Mus musculus (Mouse) protein is Linker for activation of T-cells family member 1 (Lat).